Reading from the N-terminus, the 393-residue chain is S-adenosylmethionine synthase 1 (393 aa).

Mg(2+) is bound at residue E9. H15 contributes to the ATP binding site. Residue E43 coordinates K(+). 2 residues coordinate L-methionine: E56 and Q99. Residue C114 is modified to S-nitrosocysteine. Residues D167–K169, S235–F238, D246, R252–K253, A269, K273, and K277 contribute to the ATP site. D246 is an L-methionine binding site. L-methionine is bound at residue K277.

Belongs to the AdoMet synthase family. As to quaternary structure, homotetramer. Interacts with GRF3. Mn(2+) serves as cofactor. It depends on Mg(2+) as a cofactor. The cofactor is Co(2+). Requires K(+) as cofactor. S-nitrosylated in the presence of NO. The inhibition of SAM1 activity by S-nitrosylation could contribute to the cross-talk between ethylene and NO signaling. As to expression, highly expressed in stems and roots.

Its subcellular location is the cytoplasm. The enzyme catalyses L-methionine + ATP + H2O = S-adenosyl-L-methionine + phosphate + diphosphate. It participates in amino-acid biosynthesis; S-adenosyl-L-methionine biosynthesis; S-adenosyl-L-methionine from L-methionine: step 1/1. With respect to regulation, reversibly inhibited by NO. Inhibited by 5,5'-dithiobis-2-nitrobenzoic acid (DTNB) and N-ethylmaleimide (NEM) (in vitro). Catalyzes the formation of S-adenosylmethionine from methionine and ATP. The reaction comprises two steps that are both catalyzed by the same enzyme: formation of S-adenosylmethionine (AdoMet) and triphosphate, and subsequent hydrolysis of the triphosphate. The sequence is that of S-adenosylmethionine synthase 1 (SAM1) from Arabidopsis thaliana (Mouse-ear cress).